Consider the following 145-residue polypeptide: Ribonuclease VapC7 (145 aa).

The 128-residue stretch at 2–129 (IVLDTTVLVY…PAFADLSDVV (128 aa)) folds into the PINc domain. Residues Asp-5 and Asp-100 each contribute to the Mg(2+) site.

This sequence belongs to the PINc/VapC protein family. Requires Mg(2+) as cofactor.

Toxic component of a type II toxin-antitoxin (TA) system. An RNase. The cognate antitoxin is VapB7. The chain is Ribonuclease VapC7 from Mycobacterium tuberculosis (strain ATCC 25618 / H37Rv).